Here is a 342-residue protein sequence, read N- to C-terminus: Arrestin domain-containing protein 5 (342 aa).

It belongs to the arrestin family. In terms of tissue distribution, testis-enriched.

It localises to the membrane. In terms of biological role, plays an essential role in spermatogenesis. May be involved in the anchoring of the sperm head to the tail during spermatogenesis by affecting SEC22A-mediated SUN5 and NDC1 transport and localization. The sequence is that of Arrestin domain-containing protein 5 (ARRDC5) from Homo sapiens (Human).